The following is a 387-amino-acid chain: 3-ketoacyl-CoA thiolase (387 aa).

The Acyl-thioester intermediate role is filled by Cys91. Active-site proton acceptor residues include His343 and Cys373.

It belongs to the thiolase-like superfamily. Thiolase family. In terms of assembly, heterotetramer of two alpha chains (FadB) and two beta chains (FadA).

It is found in the cytoplasm. It carries out the reaction an acyl-CoA + acetyl-CoA = a 3-oxoacyl-CoA + CoA. It functions in the pathway lipid metabolism; fatty acid beta-oxidation. Its function is as follows. Catalyzes the final step of fatty acid oxidation in which acetyl-CoA is released and the CoA ester of a fatty acid two carbons shorter is formed. This Shewanella oneidensis (strain ATCC 700550 / JCM 31522 / CIP 106686 / LMG 19005 / NCIMB 14063 / MR-1) protein is 3-ketoacyl-CoA thiolase.